The chain runs to 80 residues: Translation initiation factor IF-1 (80 aa).

The region spanning 6-80 (EKRKKEESDV…TSRGRIVYRK (75 aa)) is the S1-like domain.

It belongs to the IF-1 family. Component of the 30S ribosomal translation pre-initiation complex which assembles on the 30S ribosome in the order IF-2 and IF-3, IF-1 and N-formylmethionyl-tRNA(fMet); mRNA recruitment can occur at any time during PIC assembly.

It is found in the cytoplasm. Functionally, one of the essential components for the initiation of protein synthesis. Stabilizes the binding of IF-2 and IF-3 on the 30S subunit to which N-formylmethionyl-tRNA(fMet) subsequently binds. Helps modulate mRNA selection, yielding the 30S pre-initiation complex (PIC). Upon addition of the 50S ribosomal subunit IF-1, IF-2 and IF-3 are released leaving the mature 70S translation initiation complex. The sequence is that of Translation initiation factor IF-1 from Deinococcus geothermalis (strain DSM 11300 / CIP 105573 / AG-3a).